The primary structure comprises 247 residues: Protein McbF (247 aa).

Positions 6–234 constitute an ABC transporter domain; sequence LEINSLSFSY…NNETTQKRHL (229 aa). 40-47 provides a ligand contact to ATP; that stretch reads GENPAGKT.

It belongs to the ABC transporter superfamily.

Functionally, together with two further proteins McbE and McbG this protein causes immunity to the peptide antibiotic microcin B17, which inhibits DNA replication in enterobacteriaceae. Immunity is determined by two different mechanisms. McbE is involved in the production of extracellular MccB17 and, in a complex with mcbf it also serves as 'pump' for the export of active MccB17 from the cytoplasm to the periplasmic space. In Escherichia coli, this protein is Protein McbF (mcbF).